The following is a 94-amino-acid chain: Aspartyl/glutamyl-tRNA(Asn/Gln) amidotransferase subunit C (94 aa).

Belongs to the GatC family. Heterotrimer of A, B and C subunits.

It carries out the reaction L-glutamyl-tRNA(Gln) + L-glutamine + ATP + H2O = L-glutaminyl-tRNA(Gln) + L-glutamate + ADP + phosphate + H(+). The enzyme catalyses L-aspartyl-tRNA(Asn) + L-glutamine + ATP + H2O = L-asparaginyl-tRNA(Asn) + L-glutamate + ADP + phosphate + 2 H(+). In terms of biological role, allows the formation of correctly charged Asn-tRNA(Asn) or Gln-tRNA(Gln) through the transamidation of misacylated Asp-tRNA(Asn) or Glu-tRNA(Gln) in organisms which lack either or both of asparaginyl-tRNA or glutaminyl-tRNA synthetases. The reaction takes place in the presence of glutamine and ATP through an activated phospho-Asp-tRNA(Asn) or phospho-Glu-tRNA(Gln). The chain is Aspartyl/glutamyl-tRNA(Asn/Gln) amidotransferase subunit C from Desulfitobacterium hafniense (strain DSM 10664 / DCB-2).